A 433-amino-acid chain; its full sequence is TDIGGGLDVGGGLRGGLDIDAKGPDVDIKGPKVGGDISGPDLDVSGPDLDIDGGGKKGKGGFGFGLKMPKFGFGGHGKGDIDVDADVDIERPDLDVSGDADLPSGGVGLDVGGGIGGGLGGGLDIDANGPDVDIKGPKVGGDISGPDLDVSGPDLDIDVDGKKKGKGGFGFGMKMPKFGFGGHGKGDIDVDADVDIERPDLDVSGDADLPSGGVGLDVGGGIGGGLGGGLDIDANGPDVDIKGPKVGGDISGPDLDVSGPDLDIDVDGKKKGKGGFGFGLKIPKFMDPTFGFGGHGKGDIDVDADGGVVIPEGDIKVKTGKPDIGGDVDLPSGGVDLDVGGGIGGGLGGGLDIDAKGPDVDIKGPRVGGDISGPDLDVSGPDLDIDGDGKKKGKGGFGFGLKMPKFGFGGHGKGDIDVDADVDIERPDLNVSG.

Repeat copies occupy residues 112-122 (GGGIGGGLGGG) and 219-229 (GGGIGGGLGGG). The tract at residues 112 to 350 (GGGIGGGLGG…GGIGGGLGGG (239 aa)) is 3 X 11 AA repeats of G-G-G-I-G-G-G-L-G-G-G. The Nuclear localization signal signature appears at 266–274 (VDGKKKGKG). Residues 340-350 (GGGIGGGLGGG) form repeat 3. Disordered regions lie at residues 366–389 (RVGG…DGDG) and 411–433 (HGKG…NVSG). The span at 423–433 (DIERPDLNVSG) shows a compositional bias: basic and acidic residues.

Egg cortex.

It is found in the microsome membrane. It localises to the nucleus. Its subcellular location is the endoplasmic reticulum membrane. May function as a multidomain RNA-binding protein. May play a role in nuclear RNA processing and in early development. The sequence is that of Vesicle-associated protein (VAP-1) from Strongylocentrotus purpuratus (Purple sea urchin).